A 171-amino-acid chain; its full sequence is Ribosome maturation factor RimM (171 aa).

Residues Ala96–Leu170 form the PRC barrel domain.

Belongs to the RimM family. In terms of assembly, binds ribosomal protein uS19.

The protein resides in the cytoplasm. Its function is as follows. An accessory protein needed during the final step in the assembly of 30S ribosomal subunit, possibly for assembly of the head region. Essential for efficient processing of 16S rRNA. May be needed both before and after RbfA during the maturation of 16S rRNA. It has affinity for free ribosomal 30S subunits but not for 70S ribosomes. In Bacillus mycoides (strain KBAB4) (Bacillus weihenstephanensis), this protein is Ribosome maturation factor RimM.